The following is a 331-amino-acid chain: Taste receptor type 2 member 38 (331 aa).

The Extracellular segment spans residues 1–17 (MLTLTPVLTVSYEAKIS). A helical transmembrane segment spans residues 18-38 (FLFLSVVEFAVGIMANAFIVL). Topologically, residues 39-54 (VNFWDMVKKQPLNNCD) are cytoplasmic. The chain crosses the membrane as a helical span at residues 55-75 (IALLCLSITRLFLQGLLLLDA). The Extracellular portion of the chain corresponds to 76–94 (IQLACFQQMKDPLSHNYQA). The chain crosses the membrane as a helical span at residues 95–115 (ILTLWMSANQVSLWLAACLSL). Residues 116-142 (LYCAKIVRFSHTFPLHLASWVSRRFLQ) are Cytoplasmic-facing. The helical transmembrane segment at 143–163 (MLLVALLFSGVCTALCLWDFF) threads the bilayer. The Extracellular segment spans residues 164-198 (SRSHTVVTSMLHMNNTEFNLQIEKLNFFYSFVFCN). Asparagine 177 carries N-linked (GlcNAc...) asparagine glycosylation. The helical transmembrane segment at 199-219 (VGSVPPSLVFLISSGVLVISL) threads the bilayer. The Cytoplasmic segment spans residues 220–243 (GNHMRTMKSQTRGSRDPSLEAHVR). A helical transmembrane segment spans residues 244 to 264 (AIIFLVSFLCFYVVSFCAALI). At 265–276 (SIPLLVLWHNKG) the chain is on the extracellular side. Residues 277-297 (GVMVCIGMMAACPSGHAAILI) form a helical membrane-spanning segment. Residues 298–331 (SGNAKLKKVIVTILFWFQSRQKVRRVHKVLPRIL) are Cytoplasmic-facing.

The protein belongs to the G-protein coupled receptor T2R family. Expressed in tongue, stomach and duodenum.

The protein localises to the membrane. In terms of biological role, putative taste receptor which may play a role in the perception of bitterness. The chain is Taste receptor type 2 member 38 (Tas2r38) from Rattus norvegicus (Rat).